The following is a 393-amino-acid chain: Branched-chain-amino-acid aminotransferase, mitochondrial (393 aa).

Residues 1 to 27 (MAAATLGQVWARKLLPVPWLLCGSKRC) constitute a mitochondrion transit peptide. Y169 contacts substrate. K230 is subject to N6-(pyridoxal phosphate)lysine. Residue K322 is modified to N6-acetyllysine.

It belongs to the class-IV pyridoxal-phosphate-dependent aminotransferase family. In terms of assembly, homodimer. The cofactor is pyridoxal 5'-phosphate.

Its subcellular location is the mitochondrion. The enzyme catalyses L-leucine + 2-oxoglutarate = 4-methyl-2-oxopentanoate + L-glutamate. The catalysed reaction is L-isoleucine + 2-oxoglutarate = (S)-3-methyl-2-oxopentanoate + L-glutamate. It catalyses the reaction L-valine + 2-oxoglutarate = 3-methyl-2-oxobutanoate + L-glutamate. Catalyzes the first reaction in the catabolism of the essential branched chain amino acids leucine, isoleucine, and valine. May also function as a transporter of branched chain alpha-keto acids. The polypeptide is Branched-chain-amino-acid aminotransferase, mitochondrial (Bcat2) (Mus musculus (Mouse)).